A 960-amino-acid chain; its full sequence is Protein mono-ADP-ribosyltransferase PARP10 (960 aa).

Glu-103 is subject to ADP-ribosyl glutamic acid. The span at 325 to 341 (SMGSTSPVDPVESSTEL) shows a compositional bias: polar residues. Residues 325 to 346 (SMGSTSPVDPVESSTELPEQVG) form a disordered region. A phosphoserine mark is found at Ser-381 and Ser-388. Positions 553 to 576 (SPHGGEDRVPLEMEKEKPGGPGET) are disordered. A compositionally biased stretch (basic and acidic residues) spans 555 to 570 (HGGEDRVPLEMEKEKP). Residues 604–621 (LEEEATLQLAIHRSLESQ) carry the Ubiquitin-interacting motif. Phosphoserine is present on Ser-617. Residues 649 to 856 (DEDTGGEAQL…CAHGFNRSFC (208 aa)) are myc binding. The PARP catalytic domain occupies 755–960 (PNLSEQGLKE…TCKNILPGTP (206 aa)). The short motif at 780–787 (QDVVRAFY) is the PIP-box element. Glu-831 bears the ADP-ribosyl glutamic acid mark.

This sequence belongs to the ARTD/PARP family. In terms of assembly, interacts with MYC. Interacts with PARP14. Interacts (via-PIP box and ubiquitin-interacting motifs) with PCNA. In terms of processing, stimulated through its phosphorylation by CDK2. Acquires CDK-dependent phosphorylation through late-G1 to S phase, and from prometaphase to cytokinesis in the nucleolar organizing regions. Phosphorylation is suppressed in growth-arrested cells. Auto-mono-ADP-ribosylated on glutamate and lysine residues.

Its subcellular location is the cytoplasm. It localises to the nucleus. The catalysed reaction is L-lysyl-[protein] + NAD(+) = N(6)-(ADP-D-ribosyl)-L-lysyl-[protein] + nicotinamide + H(+). It catalyses the reaction L-aspartyl-[protein] + NAD(+) = 4-O-(ADP-D-ribosyl)-L-aspartyl-[protein] + nicotinamide. It carries out the reaction L-glutamyl-[protein] + NAD(+) = 5-O-(ADP-D-ribosyl)-L-glutamyl-[protein] + nicotinamide. ADP-ribosyltransferase that mediates mono-ADP-ribosylation of glutamate and aspartate residues on target proteins. In contrast to PARP1 and PARP2, it is not able to mediate poly-ADP-ribosylation. Catalyzes mono-ADP-ribosylation of GSK3B, leading to negatively regulate GSK3B kinase activity. Involved in translesion DNA synthesis in response to DNA damage via its interaction with PCNA. This is Protein mono-ADP-ribosyltransferase PARP10 from Mus musculus (Mouse).